Consider the following 126-residue polypeptide: MSKVQEVLDIVKEMSVLELSELVEAMEEEFGVSAAAPAPAAAPAAGGDQGGAEAAEQTEFDVVLNDAGQKKIQVIKAVKEATGMGLKEAKALADELPKAVKEKVSKEEAEELKEKIEEAGGDVEIK.

The span at 36–55 shows a compositional bias: low complexity; that stretch reads APAPAAAPAAGGDQGGAEAA. The disordered stretch occupies residues 36 to 57; that stretch reads APAPAAAPAAGGDQGGAEAAEQ.

It belongs to the bacterial ribosomal protein bL12 family. As to quaternary structure, homodimer. Part of the ribosomal stalk of the 50S ribosomal subunit. Forms a multimeric L10(L12)X complex, where L10 forms an elongated spine to which 2 to 4 L12 dimers bind in a sequential fashion. Binds GTP-bound translation factors.

Forms part of the ribosomal stalk which helps the ribosome interact with GTP-bound translation factors. Is thus essential for accurate translation. The sequence is that of Large ribosomal subunit protein bL12 from Natranaerobius thermophilus (strain ATCC BAA-1301 / DSM 18059 / JW/NM-WN-LF).